A 361-amino-acid polypeptide reads, in one-letter code: MKNRNPLIRKLLTQYFVTTGILLAFLVMIPLVIRFIAGTRTWYGTEPIYYILRFFADRWLFCVAIGALLIWFGTTIYYMTKAIGYLNETIQATTQLIEEPSKRITLSSHLIDVQEEMNQLREKSLQDQRAAKEAEQRKNDLIVYLAHDLRTPLTSVIGYLTLLKEEPQLSNAMRNRYTEIALQKAQRLELLISEFFEITRFNLTTIVLQTETTDLSLMLEQLTFEFLPLLEEKNLNWQLNLQKNVLATVDTEKIARVFDNLIRNAINYSYPDSPLLLELVESDSIHIRLTNRGKTIPEEMIGRLFEPFYRMDSSRATATSGTGLGLPIAKEILLASGGDISAESKDETIIFNVRLPKPANN.

A run of 2 helical transmembrane segments spans residues 16-36 (FVTT…IRFI) and 59-79 (WLFC…IYYM). The 216-residue stretch at 144–359 (YLAHDLRTPL…IFNVRLPKPA (216 aa)) folds into the Histidine kinase domain. His147 carries the phosphohistidine; by autocatalysis modification. Position 252 (Glu252) interacts with Mg(2+).

Post-translationally, autophosphorylated.

Its subcellular location is the membrane. It carries out the reaction ATP + protein L-histidine = ADP + protein N-phospho-L-histidine.. This chain is Sensor protein VanSC, found in Enterococcus gallinarum.